The sequence spans 163 residues: Probable ribosome biogenesis protein RLP24 (163 aa).

The protein belongs to the eukaryotic ribosomal protein eL24 family. As to quaternary structure, associated with nucleolar and cytoplasmic pre-60S particles. At the end of biogenesis it dissociates from cytoplasmic pre-60S particles and is likely to be exchanged for its ribosomal homolog, RPL24.

The protein localises to the nucleus. It is found in the nucleolus. Involved in the biogenesis of the 60S ribosomal subunit. Ensures the docking of GTPBP4/NOG1 to pre-60S particles. The polypeptide is Probable ribosome biogenesis protein RLP24 (Rsl24d1) (Mus musculus (Mouse)).